A 316-amino-acid polypeptide reads, in one-letter code: uncharacterized protein (316 aa).

The disordered stretch occupies residues M1–P34. Residues N17–G26 show a composition bias toward basic and acidic residues.

This is an uncharacterized protein from Lepidoptera (butterflies and moths).